A 419-amino-acid polypeptide reads, in one-letter code: Mitogen-activated protein kinase spm1 (419 aa).

The Protein kinase domain maps to 23–314; the sequence is YTVTKELGQG…VEEALEHPYL (292 aa). ATP-binding positions include 29–37 and Lys52; that span reads LGQGAYGIV. Asp149 (proton acceptor) is an active-site residue.

Belongs to the protein kinase superfamily. Ser/Thr protein kinase family. MAP kinase subfamily. The cofactor is Mg(2+). Post-translationally, phosphorylated by the MAP kinase kinase mkk1.

It carries out the reaction L-seryl-[protein] + ATP = O-phospho-L-seryl-[protein] + ADP + H(+). It catalyses the reaction L-threonyl-[protein] + ATP = O-phospho-L-threonyl-[protein] + ADP + H(+). Functionally, mitogen-activated protein kinase, part of the mkh1-mkk1-spm1 MAPK cascade that regulates vegetative growth, conidial formation, colony surface hydrophobicity, osmotic stress, cell wall integrity maintenance, carbon and nitrogen source utilization, chitin distribution, septa formation, and pathogenicity. The protein is Mitogen-activated protein kinase spm1 of Cytospora mali (Apple Valsa canker fungus).